We begin with the raw amino-acid sequence, 124 residues long: Glutaredoxin-2 (124 aa).

Cysteines 13 and 16 form a disulfide.

The protein belongs to the glutaredoxin family. Homodimer.

It is found in the host cytoplasm. In terms of biological role, glutaredoxin necessary for virion morphogenesis and virus replication. Functions as a thiol-disulfide transfer protein between membrane-associated OPG128 and substrates OPG095 or OPG053. The complete pathway for formation of disulfide bonds in intracellular virion membrane proteins sequentially involves oxidation of OPG072, OPG128 and OPG088. Exhibit thioltransferase and dehydroascorbate reductase activities in vitro. The sequence is that of Glutaredoxin-2 (OPG088) from Bos taurus (Bovine).